The sequence spans 438 residues: Xylose isomerase (438 aa).

Catalysis depends on residues histidine 100 and aspartate 103. Positions 231, 267, 270, 295, 306, 308, and 338 each coordinate Mg(2+).

It belongs to the xylose isomerase family. As to quaternary structure, homotetramer. It depends on Mg(2+) as a cofactor.

The protein resides in the cytoplasm. The enzyme catalyses alpha-D-xylose = alpha-D-xylulofuranose. The chain is Xylose isomerase from Pseudomonas savastanoi pv. phaseolicola (strain 1448A / Race 6) (Pseudomonas syringae pv. phaseolicola (strain 1448A / Race 6)).